Reading from the N-terminus, the 210-residue chain is MPNFSYEDSFSHGSNAIVVGVDEVGYGSIAGPVVAAAVYIPDRNVECIPNIKDSKLLTPKKRDALYKELLSHTVCGTGLASIDEIEEHNILVASHMAMRRALENLNLQRIDLVLVDGSRELKSQWPSKSIINGDELSISIAAASIVAKVTRDNMMRELHDQYPEYHWNKNCGYGTAAHILALKQHGATPLHRKTFAPVKKCIISTKNQDK.

The RNase H type-2 domain occupies 16 to 207; it reads AIVVGVDEVG…VKKCIISTKN (192 aa). Positions 22, 23, and 116 each coordinate a divalent metal cation.

It belongs to the RNase HII family. Mn(2+) is required as a cofactor. Mg(2+) serves as cofactor.

It localises to the cytoplasm. The enzyme catalyses Endonucleolytic cleavage to 5'-phosphomonoester.. Endonuclease that specifically degrades the RNA of RNA-DNA hybrids. In Anaplasma phagocytophilum (strain HZ), this protein is Ribonuclease HII.